The following is a 171-amino-acid chain: Large ribosomal subunit protein bL9 (171 aa).

The protein belongs to the bacterial ribosomal protein bL9 family.

Its function is as follows. Binds to the 23S rRNA. This is Large ribosomal subunit protein bL9 from Rickettsia akari (strain Hartford).